The sequence spans 273 residues: Putative peptidyl-prolyl cis-trans isomerase Cbf2 (273 aa).

The signal sequence occupies residues methionine 1–alanine 21. The PpiC domain maps to proline 131 to asparagine 228.

It carries out the reaction [protein]-peptidylproline (omega=180) = [protein]-peptidylproline (omega=0). The chain is Putative peptidyl-prolyl cis-trans isomerase Cbf2 (cbf2) from Campylobacter jejuni subsp. jejuni serotype O:23/36 (strain 81-176).